The chain runs to 515 residues: Maturase K (515 aa).

This sequence belongs to the intron maturase 2 family. MatK subfamily.

It localises to the plastid. Its subcellular location is the chloroplast. Usually encoded in the trnK tRNA gene intron. Probably assists in splicing its own and other chloroplast group II introns. In Cedrus deodara (Deodar cedar), this protein is Maturase K.